Here is a 448-residue protein sequence, read N- to C-terminus: uncharacterized protein (448 aa).

Residues 4 to 155 (QAIVLATFDA…SAVNLEFDSL (152 aa)) form the uDENN domain. Residues 183–326 (LDHLGPAFYC…FKGLSRYLSF (144 aa)) enclose the cDENN domain. Residues 328–428 (GESSWGLTTY…WQYGKYFWLR (101 aa)) form the dDENN domain. A helical transmembrane segment spans residues 425-447 (FWLRRVSLIFLASTCFLFILWKL).

The protein resides in the golgi apparatus membrane. It localises to the endoplasmic reticulum membrane. This is an uncharacterized protein from Schizosaccharomyces pombe (strain 972 / ATCC 24843) (Fission yeast).